Consider the following 143-residue polypeptide: Small ribosomal subunit protein uS12 (143 aa).

Positions 1 to 20 (MGKPRGLRTARKLKNHRREQ) are enriched in basic residues. The disordered stretch occupies residues 1-28 (MGKPRGLRTARKLKNHRREQRWHDKDYK). Pro-62 is subject to Hydroxyproline.

This sequence belongs to the universal ribosomal protein uS12 family. Component of the 40S small ribosomal subunit.

The protein localises to the cytoplasm. Its subcellular location is the cytosol. The protein resides in the rough endoplasmic reticulum. The polypeptide is Small ribosomal subunit protein uS12 (RPS23) (Lumbricus rubellus (Humus earthworm)).